The primary structure comprises 134 residues: Perlwapin (134 aa).

WAP domains follow at residues 2 to 45 (GPNL…CVPK), 46 to 89 (PKPG…YRPE), and 90 to 132 (KPGS…EKPC). Intrachain disulfides connect C8/C34, C17/C38, C21/C33, C27/C42, C51/C77, C59/C82, C64/C76, C70/C85, C94/C121, C104/C124, C108/C120, and C114/C128.

As to expression, nacreous layer of shell.

Its function is as follows. Inhibits growth of calcium carbonate crystals. May inhibit growth of certain crystallographic planes in the mineral phase of nacre in the shell. In Haliotis laevigata (Smooth Australian abalone), this protein is Perlwapin.